Here is a 190-residue protein sequence, read N- to C-terminus: Pyridoxal 5'-phosphate synthase subunit PdxT (190 aa).

Position 46 to 48 (G46 to S48) interacts with L-glutamine. Catalysis depends on C78, which acts as the Nucleophile. Residues R105 and I138–R139 contribute to the L-glutamine site. Residues H174 and E176 each act as charge relay system in the active site.

It belongs to the glutaminase PdxT/SNO family. In terms of assembly, in the presence of PdxS, forms a dodecamer of heterodimers. Only shows activity in the heterodimer.

It catalyses the reaction aldehydo-D-ribose 5-phosphate + D-glyceraldehyde 3-phosphate + L-glutamine = pyridoxal 5'-phosphate + L-glutamate + phosphate + 3 H2O + H(+). The enzyme catalyses L-glutamine + H2O = L-glutamate + NH4(+). It participates in cofactor biosynthesis; pyridoxal 5'-phosphate biosynthesis. In terms of biological role, catalyzes the hydrolysis of glutamine to glutamate and ammonia as part of the biosynthesis of pyridoxal 5'-phosphate. The resulting ammonia molecule is channeled to the active site of PdxS. This chain is Pyridoxal 5'-phosphate synthase subunit PdxT, found in Bifidobacterium longum (strain NCC 2705).